The sequence spans 147 residues: Histidine-containing phosphotransfer protein 1 (147 aa).

Residues 38-133 form the HPt domain; that stretch reads APDFVSEVVT…YDLRNKFQAM (96 aa). H79 is subject to Phosphohistidine.

In terms of processing, two-component system major event consists of a His-to-Asp phosphorelay between a sensor histidine kinase (HK) and a response regulator (RR). In plants, the His-to-Asp phosphorelay involves an additional intermediate named Histidine-containing phosphotransfer protein (HPt). This multistep phosphorelay consists of a His-Asp-His-Asp sequential transfer of a phosphate group between first a His and an Asp of the HK protein, followed by the transfer to a conserved His of the HPt protein and finally the transfer to an Asp in the receiver domain of the RR protein. As to expression, widely expressed.

The protein resides in the cytoplasm. The protein localises to the cytosol. It is found in the nucleus. Functionally, functions as a two-component phosphorelay mediators between cytokinin sensor histidine kinases and response regulators (B-type ARRs). Plays an important role in propagating cytokinin signal transduction through the multistep His-to-Asp phosphorelay. Functions as a positive regulator of the cytokinin signaling pathway. May play a regulatory role in salt and drought tolerance during plant development. The chain is Histidine-containing phosphotransfer protein 1 from Oryza sativa subsp. japonica (Rice).